A 208-amino-acid polypeptide reads, in one-letter code: Putative dioxygenase RF_0617 (208 aa).

The protein belongs to the intradiol ring-cleavage dioxygenase family.

The sequence is that of Putative dioxygenase RF_0617 from Rickettsia felis (strain ATCC VR-1525 / URRWXCal2) (Rickettsia azadi).